A 485-amino-acid polypeptide reads, in one-letter code: NADH-quinone oxidoreductase subunit N (485 aa).

14 consecutive transmembrane segments (helical) span residues 8–28 (LIALLPLLIVGLTVVVVMLSI), 35–55 (FLNATLSVIGLNAALVSLWFV), 71–91 (GFAMLYTGLVLLASLATCTFA), 105–125 (FYLLVLIASLGGILLANANHL), 127–147 (TLFLGIELISLPLFGLIGYAF), 159–179 (YTILSAAASSFLLFGMALVYA), 203–223 (LLAGFGLMIVGPGFKLSLVPF), 235–255 (PAPVSTFLATASKIAIFGVVM), 271–291 (VVLGIIAFASIIFGNLMALSQ), 297–317 (LLGYSSISHLGYLLVALIALQ), 326–346 (VGVYLAGYLFSSLGAFGVVSL), 373–393 (AAVMTVMMLSLAGIPMTLGFI), 408–430 (WWLVAAVVVGSAIGLYYYLRVAV), and 455–475 (IVVLISALLVLVLGVWPQPLI).

This sequence belongs to the complex I subunit 2 family. As to quaternary structure, NDH-1 is composed of 13 different subunits. Subunits NuoA, H, J, K, L, M, N constitute the membrane sector of the complex.

It localises to the cell inner membrane. It carries out the reaction a quinone + NADH + 5 H(+)(in) = a quinol + NAD(+) + 4 H(+)(out). Its function is as follows. NDH-1 shuttles electrons from NADH, via FMN and iron-sulfur (Fe-S) centers, to quinones in the respiratory chain. The immediate electron acceptor for the enzyme in this species is believed to be ubiquinone. Couples the redox reaction to proton translocation (for every two electrons transferred, four hydrogen ions are translocated across the cytoplasmic membrane), and thus conserves the redox energy in a proton gradient. The sequence is that of NADH-quinone oxidoreductase subunit N from Salmonella paratyphi A (strain ATCC 9150 / SARB42).